Reading from the N-terminus, the 195-residue chain is Putative archaetidylserine decarboxylase proenzyme (195 aa).

The active-site Schiff-base intermediate with substrate; via pyruvic acid is Ser159. Position 159 is a pyruvic acid (Ser); by autocatalysis (Ser159).

It belongs to the phosphatidylserine decarboxylase family. PSD-A subfamily. As to quaternary structure, heterodimer of a large membrane-associated beta subunit and a small pyruvoyl-containing alpha subunit. It depends on pyruvate as a cofactor. Post-translationally, is synthesized initially as an inactive proenzyme. Formation of the active enzyme involves a self-maturation process in which the active site pyruvoyl group is generated from an internal serine residue via an autocatalytic post-translational modification. Two non-identical subunits are generated from the proenzyme in this reaction, and the pyruvate is formed at the N-terminus of the alpha chain, which is derived from the carboxyl end of the proenzyme. The autoendoproteolytic cleavage occurs by a canonical serine protease mechanism, in which the side chain hydroxyl group of the serine supplies its oxygen atom to form the C-terminus of the beta chain, while the remainder of the serine residue undergoes an oxidative deamination to produce ammonia and the pyruvoyl prosthetic group on the alpha chain. During this reaction, the Ser that is part of the protease active site of the proenzyme becomes the pyruvoyl prosthetic group, which constitutes an essential element of the active site of the mature decarboxylase. Is synthesized initially as an inactive proenzyme. Formation of the active enzyme involves a self-maturation process in which the active site pyruvoyl group is generated from an internal serine residue via an autocatalytic post-translational modification. Two non-identical subunits are generated from the proenzyme in this reaction, and the pyruvate is formed at the N-terminus of the alpha chain, which is derived from the carboxyl end of the proenzyme. The post-translation cleavage follows an unusual pathway, termed non-hydrolytic serinolysis, in which the side chain hydroxyl group of the serine supplies its oxygen atom to form the C-terminus of the beta chain, while the remainder of the serine residue undergoes an oxidative deamination to produce ammonia and the pyruvoyl prosthetic group on the alpha chain.

The protein localises to the cell membrane. The enzyme catalyses archaetidylserine + H(+) = archaetidylethanolamine + CO2. Catalyzes the formation of archaetidylethanolamine (PtdEtn) from archaetidylserine (PtdSer). The chain is Putative archaetidylserine decarboxylase proenzyme from Archaeoglobus fulgidus (strain ATCC 49558 / DSM 4304 / JCM 9628 / NBRC 100126 / VC-16).